A 345-amino-acid chain; its full sequence is N-acetyl-gamma-glutamyl-phosphate reductase (345 aa).

Residue Cys149 is part of the active site.

This sequence belongs to the NAGSA dehydrogenase family. Type 1 subfamily.

It localises to the cytoplasm. It catalyses the reaction N-acetyl-L-glutamate 5-semialdehyde + phosphate + NADP(+) = N-acetyl-L-glutamyl 5-phosphate + NADPH + H(+). It participates in amino-acid biosynthesis; L-arginine biosynthesis; N(2)-acetyl-L-ornithine from L-glutamate: step 3/4. Its function is as follows. Catalyzes the NADPH-dependent reduction of N-acetyl-5-glutamyl phosphate to yield N-acetyl-L-glutamate 5-semialdehyde. The chain is N-acetyl-gamma-glutamyl-phosphate reductase from Geobacillus stearothermophilus (Bacillus stearothermophilus).